The sequence spans 791 residues: Putative inactive tyrosine-protein kinase Wsck (791 aa).

The signal sequence occupies residues 1 to 26 (MECGSHSGHRPIPIWLSSCLVAMCLG). The Extracellular portion of the chain corresponds to 27–401 (LPLGAAVPQE…YATFEKGQSS (375 aa)). Residues 39 to 125 (AYYYVGCYTA…VGVHSYYSTI (87 aa)) form the WSC domain. One can recognise a Fibronectin type-III domain in the interval 131 to 246 (GPHHLRISNK…ASIEATTEVG (116 aa)). N139, N217, and N329 each carry an N-linked (GlcNAc...) asparagine glycan. Residues 402 to 422 (VVALAVTCVIFGSCLLLSLIA) traverse the membrane as a helical segment. The Cytoplasmic segment spans residues 423–791 (YFYLRYKTCR…PQLEAVATMG (369 aa)). Residues 493 to 758 (LNVNDVIGDG…DVAFGVRQLM (266 aa)) form the Protein kinase domain. 499 to 507 (IGDGRFGEI) contributes to the ATP binding site.

It belongs to the protein kinase superfamily. Tyr protein kinase family.

It localises to the membrane. In terms of biological role, probably lacks tyrosine-protein kinase activity. This Drosophila melanogaster (Fruit fly) protein is Putative inactive tyrosine-protein kinase Wsck.